The sequence spans 500 residues: Na(+)/H(+) antiporter NhaB (500 aa).

12 helical membrane passes run 28-50 (FLLSNPLLLWLAGPTVAAWVLVG), 68-88 (GGLLVLEALLLGLASPEALYA), 98-118 (LLLMFMVAGIYFMKDLLLLLF), 121-141 (LLLGVRSKTLLSLLFCLLAAL), 145-165 (FLDALTVTAVVISVAVAFFAV), 205-225 (LLMHAAVGTALGGVCTLVGEP), 244-264 (QVAPVSMPVLAAGLLTCVALE), 301-318 (ALLVQALAALVLMIGLAL), 350-370 (FQEALPFTALLVAFFAVVAVI), 394-414 (MLFIANGLLSAISDNVFVATI), 449-469 (VATPNGQAAFLFLLTSSIAPL), and 477-497 (MVWMALPYTLVMGGLGWWAVS).

Belongs to the NhaB Na(+)/H(+) (TC 2.A.34) antiporter family.

Its subcellular location is the cell inner membrane. It catalyses the reaction 2 Na(+)(in) + 3 H(+)(out) = 2 Na(+)(out) + 3 H(+)(in). Na(+)/H(+) antiporter that extrudes sodium in exchange for external protons. The chain is Na(+)/H(+) antiporter NhaB from Pseudomonas paraeruginosa (strain DSM 24068 / PA7) (Pseudomonas aeruginosa (strain PA7)).